The sequence spans 318 residues: Beta-sarcoglycan (318 aa).

Residues 1 to 32 (MAAAAAAAAEQQSSNGPVKKSMREKAVERRNV) form a disordered region. Residues 1 to 65 (MAAAAAAAAE…GLRGRKGNLA (65 aa)) are Cytoplasmic-facing. Basic and acidic residues predominate over residues 21–32 (SMREKAVERRNV). Residues 66 to 86 (ICVIVLLFLLAVINLIITLVI) form a helical; Signal-anchor for type II membrane protein membrane-spanning segment. The Extracellular portion of the chain corresponds to 87–318 (WAVIRIGPNG…VSDNPCGNTH (232 aa)). 3 N-linked (GlcNAc...) asparagine glycosylation sites follow: asparagine 158, asparagine 211, and asparagine 258. 2 disulfide bridges follow: cysteine 288–cysteine 314 and cysteine 290–cysteine 307.

This sequence belongs to the sarcoglycan beta/delta/gamma/zeta family. As to quaternary structure, cross-link to form 2 major subcomplexes: one consisting of SGCB, SGCD and SGCG and the other consisting of SGCB and SGCD. The association between SGCB and SGCG is particularly strong while SGCA is loosely associated with the other sarcoglycans. In terms of processing, disulfide bonds are present.

It is found in the cell membrane. It localises to the sarcolemma. The protein localises to the cytoplasm. Its subcellular location is the cytoskeleton. Its function is as follows. Component of the sarcoglycan complex, a subcomplex of the dystrophin-glycoprotein complex which forms a link between the F-actin cytoskeleton and the extracellular matrix. The sequence is that of Beta-sarcoglycan (SGCB) from Oryctolagus cuniculus (Rabbit).